We begin with the raw amino-acid sequence, 178 residues long: Long polar fimbria protein A (178 aa).

The signal sequence occupies residues 1-24 (MEFLMKKVVFALSALAVVSTSAFA).

This sequence belongs to the fimbrial protein family.

It localises to the fimbrium. This Salmonella typhimurium (strain LT2 / SGSC1412 / ATCC 700720) protein is Long polar fimbria protein A (lpfA).